We begin with the raw amino-acid sequence, 83 residues long: Protein kreg-1 (83 aa).

Residues 62-83 (GHHHHHHGHHFGHHHHHHHGHH) form a disordered region.

As to expression, weakly expressed in the intestine, but expression is up-regulated in response to Cu(2+).

Functionally, plays a role in the stress response to heavy metals such as copper, probably in a fos-1/kgb-1-dependent manner. This is Protein kreg-1 from Caenorhabditis elegans.